The primary structure comprises 520 residues: MENIEKLLMQEKILMLELDLVRAKISLARANGSSQQGDLSLHRETPVKEEAVHSALATFTPTQVKAIPEQTAPGKESTNPLMASILPKDMNPVQTGIRLAVPGDFLRPHQGIPIPQKSELSSTVVPLRDESGIQHPHINYYVVYNGPHAGIYDDWGCTKAATNGVPGVAHKKFATITEARAAADAYTTSQQTDRLNFIPKGEAQLKPKSFREALTSPPKQKAHWLTLGTKRPSSDPAPKEISFAPEITMDDFLYLYDLGRKFDGEGDDTMFTTDNEKISLFNFRKNADPQMVREAYAAGLIKTIYPSNNLQEIKYLPKKVKDAVKRFRTNCIKNTEKDIFLKIRSTIPVWTIQGLLHKPRQVIEIGVSKKVVPTESKAMESKIQIEDLTELAVKTGEQFIQSLLRLNDKKKIFVNMVEDDTLVYSKNIKDTVSEDQRAIETFQQRVISGNLLGFHCPAICHFIERTVEKEGGSYKVHHCDKGKAIVQDASADSGPKDGPPPTRSIVEKEDVPTTSSKQVD.

Residues 486–520 are disordered; it reads VQDASADSGPKDGPPPTRSIVEKEDVPTTSSKQVD.

It belongs to the caulimoviridae viroplasmin family.

It is found in the host cytoplasm. In terms of biological role, enhances the ribosomal termination-reinitiation event leading to the translation of major open reading frames on the polycistronic viral RNAs. This Cauliflower mosaic virus (strain BBC) (CaMV) protein is Transactivator/viroplasmin protein.